The sequence spans 116 residues: Large ribosomal subunit protein bL19 (116 aa).

Belongs to the bacterial ribosomal protein bL19 family.

Functionally, this protein is located at the 30S-50S ribosomal subunit interface and may play a role in the structure and function of the aminoacyl-tRNA binding site. This chain is Large ribosomal subunit protein bL19, found in Streptomyces griseus subsp. griseus (strain JCM 4626 / CBS 651.72 / NBRC 13350 / KCC S-0626 / ISP 5235).